Here is an 83-residue protein sequence, read N- to C-terminus: Delta-conotoxin-like Ac6.2 (83 aa).

Positions 1–22 (MKLTCVVIVAVLFLTAWTFVTA) are cleaved as a signal peptide. Positions 23 to 51 (DDSRYGLKNLFPKARHEMKNPEASKLNKR) are excised as a propeptide. 3 cysteine pairs are disulfide-bonded: cysteine 54-cysteine 69, cysteine 61-cysteine 73, and cysteine 68-cysteine 78. 2 positions are modified to 4-hydroxyproline: proline 57 and proline 65.

This sequence belongs to the conotoxin O1 superfamily. In terms of tissue distribution, expressed by the venom duct.

Its subcellular location is the secreted. In terms of biological role, delta-conotoxins bind to site 6 of voltage-gated sodium channels (Nav) and inhibit the inactivation process. The polypeptide is Delta-conotoxin-like Ac6.2 (Conus achatinus (Little frog cone)).